Reading from the N-terminus, the 334-residue chain is D-fructose 1,6-bisphosphatase class 2/sedoheptulose 1,7-bisphosphatase (334 aa).

Residues Asp-33, Glu-57, Asp-85, and Glu-88 each coordinate Mn(2+). Residues Glu-88–Thr-90, Tyr-119, Arg-164–Arg-166, and Asp-186–Asp-188 each bind substrate. Glu-213 serves as a coordination point for Mn(2+).

Belongs to the FBPase class 2 family. Homotetramer. The cofactor is Mn(2+).

The enzyme catalyses beta-D-fructose 1,6-bisphosphate + H2O = beta-D-fructose 6-phosphate + phosphate. The catalysed reaction is D-sedoheptulose 1,7-bisphosphate + H2O = D-sedoheptulose 7-phosphate + phosphate. The protein operates within carbohydrate biosynthesis; Calvin cycle. Functionally, catalyzes the hydrolysis of fructose 1,6-bisphosphate (Fru 1,6-P2) and sedoheptulose 1,7-bisphosphate (Sed 1,7-P2) to fructose 6-phosphate and sedoheptulose 7-phosphate, respectively. This is D-fructose 1,6-bisphosphatase class 2/sedoheptulose 1,7-bisphosphatase from Synechococcus sp. (strain RCC307).